Consider the following 638-residue polypeptide: Epithelial sodium channel subunit beta (638 aa).

Over 1–50 (MPVKKYLLKCLHRLQKGPGYTYKELLVWYCNNTNTHGPKRIICEGPKKKA) the chain is Cytoplasmic. Residues 51 to 71 (MWFLLTLLFACLVCWQWGVFI) form a helical membrane-spanning segment. Residues 72–530 (QTYLSWEVSV…GGQFGFWMGG (459 aa)) are Extracellular-facing. 9 cysteine pairs are disulfide-bonded: C98–C270, C182–C187, C194–C201, C247–C254, C359–C446, C384–C442, C388–C438, C397–C424, and C399–C413. N-linked (GlcNAc...) asparagine glycans are attached at residues N135 and N141. The chain crosses the membrane as a helical span at residues 531–551 (SVLCLIEFGEIIIDFIWITVI). At 552–638 (KLVASCKGLR…MESDSEVEAI (87 aa)) the chain is on the cytoplasmic side. Residues 598-620 (NAEVYPDQQTLPIPGTPPPNYDS) form a disordered region. Residues 614 to 618 (PPPNY) carry the PY motif; recruits WW domain-containing proteins and is thereby required for ubiquitination and inhibition of the channel by NEDD4 and NEDD4L motif. Phosphoserine occurs at positions 631 and 633.

The protein belongs to the amiloride-sensitive sodium channel (TC 1.A.6) family. SCNN1B subfamily. Component of the heterotrimeric epithelial sodium channel (ENaC) composed of an alpha/SCNN1A, a beta/SCNN1B and a gamma/SCNN1G subunit. Interacts with WWP1 (via WW domains). Interacts with WWP2 (via WW domains). Interacts with the full-length immature form of PCSK9 (pro-PCSK9). Interacts (N-glycosylated) with BPIFA1; the interaction is direct and inhibits the proteolytic processing of SCNN1A and SCNN1G and the activation of ENaC. Ubiquitinated. Can be ubiquitinated at multiple sites and undergo monoubiquitination and polyubiquitination. Ubiquitination by NEDD4 or NEDD4L inhibits the ENaC channel through endocytosis, intracellular retention and degradation of its individual subunits. However, some studies could not confirm the ubiquitination of this subunit of the ENaC. In terms of processing, N-glycosylated. N-glycosylation is required for interaction with BPIFA1. Post-translationally, phosphorylated on serine and threonine residues. Aldosterone and insulin increase the basal level of phosphorylation. Expressed in lung and epididymis. In the caput region of the epididymis, expressed at the luminal and basolateral surfaces of the ducts and in the smooth muscle coat. In the caudal region of the epididymis, expressed along the luminal border but not continuously, in the smooth muscle coat, in the interstitial muscle tissue and in sperm in the caudal lumen.

It is found in the apical cell membrane. Its subcellular location is the cytoplasmic vesicle membrane. The enzyme catalyses Na(+)(in) = Na(+)(out). Originally identified and characterized by its inhibition by the diuretic drug amiloride. Its function is as follows. This is one of the three pore-forming subunits of the heterotrimeric epithelial sodium channel (ENaC), a critical regulator of sodium balance and fluid homeostasis. ENaC operates in epithelial tissues, where it mediates the electrodiffusion of sodium ions from extracellular fluid through the apical membrane of cells, with water following osmotically. It plays a key role in maintaining sodium homeostasis through electrogenic sodium reabsorption in the kidneys. This subunit is not essential for ENaC function in airway surface liquid homeostasis and proper mucus clearance. The sequence is that of Epithelial sodium channel subunit beta from Rattus norvegicus (Rat).